A 174-amino-acid polypeptide reads, in one-letter code: Centrosomal protein 20 (174 aa).

The necessary and sufficient for homooligomerization and localization to centrosomes and pericentriolar satellites stretch occupies residues Met-1–Ile-104. One can recognise a LisH domain in the interval Glu-49–Val-81. The interval Thr-136–Arg-174 is disordered. Ser-144 carries the phosphoserine modification. Residues Arg-145–Gly-157 show a composition bias toward basic and acidic residues.

It belongs to the CEP43 family. As to quaternary structure, homooligomer; probably required for localization to centrosomes. Forms a complex with KIAA0753/OFIP and OFD1; within this complex may stabilize the interaction between OFD1 and KIAA0753/OFIP. Interacts with PCM1; this interaction may be mediated by KIAA0753/OFIP.

It localises to the cytoplasm. The protein resides in the cytoskeleton. It is found in the microtubule organizing center. Its subcellular location is the centrosome. The protein localises to the centriole. It localises to the cell projection. The protein resides in the cilium. It is found in the cilium basal body. Its subcellular location is the cytoplasmic granule. The protein localises to the centriolar satellite. Involved in the biogenesis of cilia. Required for the recruitment of PLK1 to centrosomes and S phase progression. This Mus musculus (Mouse) protein is Centrosomal protein 20.